Reading from the N-terminus, the 229-residue chain is NAD(P)H-hydrate epimerase (229 aa).

The 208-residue stretch at 10–217 folds into the YjeF N-terminal domain; it reads AINVDLELFN…ALQRKYELNL (208 aa). 60–64 is a (6S)-NADPHX binding site; that stretch reads NNGGD. Positions 61 and 125 each coordinate K(+). (6S)-NADPHX-binding positions include 129–135 and D158; that span reads GFSFKPP. S161 contacts K(+).

It belongs to the NnrE/AIBP family. It depends on K(+) as a cofactor.

The catalysed reaction is (6R)-NADHX = (6S)-NADHX. It catalyses the reaction (6R)-NADPHX = (6S)-NADPHX. Catalyzes the epimerization of the S- and R-forms of NAD(P)HX, a damaged form of NAD(P)H that is a result of enzymatic or heat-dependent hydration. This is a prerequisite for the S-specific NAD(P)H-hydrate dehydratase to allow the repair of both epimers of NAD(P)HX. The polypeptide is NAD(P)H-hydrate epimerase (Drosophila mojavensis (Fruit fly)).